The sequence spans 382 residues: Apolipoprotein A-IV (382 aa).

The signal sequence occupies residues 1 to 20 (MFLRAVVLTLALVAVTGARA). Tandem repeats lie at residues 33–54 (DYFSQLSNNAKEAVEHLQQSEL), 60–81 (ALFQDKLGQVNTYADNLQKKLV), 82–103 (PFATELHERLTKDSEKLKEEIR), 115–136 (PHANEVSQKIGDNVRELQQRLG), 137–158 (PYADELRTQVNTHAEHLRRHLT), 159–180 (SHAQRMEAVLRENVDNLQSSLT), 181–202 (PYADEFKAKIDRNIEELKGHLT), 203–224 (PYADELKVKIDQNVEELRRSLA), 225–246 (PYAQDVQEKLNHQLEGLAFQMK), 247–268 (KNAEELKAKITANADELRQRLA), 269–286 (PVVEDVRGKLRDNAKGLQ), 287–308 (ESLAQLNSHLDRQVEEFRHNMG), and 309–330 (PYGDTFNRALVQQVEELRQKLG). The 13 X 22 AA approximate tandem repeats stretch occupies residues 33-330 (DYFSQLSNNA…QVEELRQKLG (298 aa)). The tract at residues 362–382 (ENQDMPLALPEQEQAPGPLES) is disordered.

The protein belongs to the apolipoprotein A1/A4/E family. As to quaternary structure, homodimer.

It localises to the secreted. In terms of biological role, may have a role in chylomicrons and VLDL secretion and catabolism. Required for efficient activation of lipoprotein lipase by ApoC-II; potent activator of LCAT. Apoa-IV is a major component of HDL and chylomicrons. In Acinonyx jubatus (Cheetah), this protein is Apolipoprotein A-IV (APOA4).